A 317-amino-acid chain; its full sequence is Pinoresinol reductase 1 (317 aa).

Thr18, Tyr20, Ile21, Arg41, Lys50, Ser90, Gly91, Arg95, Asn98, Ser121, and Glu122 together coordinate NADP(+). Residue Met125 participates in (-)-pinoresinol binding. NADP(+)-binding residues include Lys144 and Phe166. Lys144 functions as the Proton acceptor in the catalytic mechanism. (-)-pinoresinol-binding residues include Met177 and Val178.

This sequence belongs to the NmrA-type oxidoreductase family. Isoflavone reductase subfamily. In terms of assembly, forms homodimers. As to expression, expressed in roots and stems.

The enzyme catalyses (-)-lariciresinol + NADP(+) = (-)-pinoresinol + NADPH + H(+). It carries out the reaction (+)-lariciresinol + NADP(+) = (+)-pinoresinol + NADPH + H(+). In terms of biological role, reductase involved in lignan biosynthesis. Involved in secondary cell wall biosynthesis in fiber cells. Unlike conventional pinoresinol reductases that can reduce both pinoresinol and lariciresinol, PRR1 shows a strict substrate preference toward pinoresinol. Active on both (+) and (-)-pinoresinol. Abstracts the 4R-hydride from the NADPH cofactor during catalysis. The polypeptide is Pinoresinol reductase 1 (Arabidopsis thaliana (Mouse-ear cress)).